We begin with the raw amino-acid sequence, 251 residues long: Ditrans,polycis-undecaprenyl-diphosphate synthase ((2E,6E)-farnesyl-diphosphate specific) (251 aa).

Residue Asp-19 is part of the active site. Position 19 (Asp-19) interacts with Mg(2+). Substrate is bound by residues 20 to 23, Trp-24, His-36, and 64 to 66; these read GNNR and SSE. The active-site Proton acceptor is the Asn-67. Substrate is bound by residues Trp-68, Arg-70, Arg-187, and 193-195; that span reads RIS. Position 206 (Glu-206) interacts with Mg(2+).

Belongs to the UPP synthase family. As to quaternary structure, homodimer. It depends on Mg(2+) as a cofactor.

It catalyses the reaction 8 isopentenyl diphosphate + (2E,6E)-farnesyl diphosphate = di-trans,octa-cis-undecaprenyl diphosphate + 8 diphosphate. Functionally, catalyzes the sequential condensation of isopentenyl diphosphate (IPP) with (2E,6E)-farnesyl diphosphate (E,E-FPP) to yield (2Z,6Z,10Z,14Z,18Z,22Z,26Z,30Z,34E,38E)-undecaprenyl diphosphate (di-trans,octa-cis-UPP). UPP is the precursor of glycosyl carrier lipid in the biosynthesis of bacterial cell wall polysaccharide components such as peptidoglycan and lipopolysaccharide. The sequence is that of Ditrans,polycis-undecaprenyl-diphosphate synthase ((2E,6E)-farnesyl-diphosphate specific) from Pseudomonas aeruginosa (strain ATCC 15692 / DSM 22644 / CIP 104116 / JCM 14847 / LMG 12228 / 1C / PRS 101 / PAO1).